The sequence spans 420 residues: UDP-N-acetylglucosamine 1-carboxyvinyltransferase (420 aa).

A phosphoenolpyruvate-binding site is contributed by 22-23 (KN). R93 is a UDP-N-acetyl-alpha-D-glucosamine binding site. C117 serves as the catalytic Proton donor. C117 carries the 2-(S-cysteinyl)pyruvic acid O-phosphothioketal modification. Residues D307 and I329 each coordinate UDP-N-acetyl-alpha-D-glucosamine.

The protein belongs to the EPSP synthase family. MurA subfamily.

It localises to the cytoplasm. It catalyses the reaction phosphoenolpyruvate + UDP-N-acetyl-alpha-D-glucosamine = UDP-N-acetyl-3-O-(1-carboxyvinyl)-alpha-D-glucosamine + phosphate. It functions in the pathway cell wall biogenesis; peptidoglycan biosynthesis. Functionally, cell wall formation. Adds enolpyruvyl to UDP-N-acetylglucosamine. The chain is UDP-N-acetylglucosamine 1-carboxyvinyltransferase from Shewanella pealeana (strain ATCC 700345 / ANG-SQ1).